We begin with the raw amino-acid sequence, 508 residues long: MLGSKKKYIVNGNSGIKAQIQFADQKQEFNKRPTKIGRRSLSRSISQSSTDSYSSAASYTDSSDDETSPRDKQQKNSKGSSDFCVKNIKQAEFGRREIEIAEQEMPALMALRKRAQGEKPLAGAKIVGCTHITAQTAVLMETLGALGAQCRWAACNIYSTLNEVAAALAESGFPVFAWKGESEDDFWWCIDRCVNVEGWQPNMILDDGGDLTHWIYKKYPNMFKKIKGIVEESVTGVHRLYQLSKAGKLCVPAMNVNDSVTKQKFDNLYCCRESILDGLKRTTDMMFGGKQVVVCGYGEVGKGCCAALKAMGSIVYVTEIDPICALQACMDGFRLVKLNEVIRQVDIVITCTGNKNVVTREHLDRMKNSCIVCNIGHSNTEIDVASLRTPELTWERVRSQVDHVIWPDGKRIVLLAEGRLLNLSCSTVPTFVLSITATTQALALIELYNAPEGRYKQDVYLLPKKMDEYVASLHLPTFDAHLTELTDEQAKYLGLNKNGPFKPNYYRY.

Serine 4 bears the Phosphoserine mark. The interval 24-81 (DQKQEFNKRPTKIGRRSLSRSISQSSTDSYSSAASYTDSSDDETSPRDKQQKNSKGSS) is disordered. Over residues 32–41 (RPTKIGRRSL) the composition is skewed to basic residues. Low complexity predominate over residues 42-61 (SRSISQSSTDSYSSAASYTD). 4 positions are modified to phosphoserine: serine 46, serine 49, serine 52, and serine 55. Substrate-binding residues include threonine 133, aspartate 207, and glutamate 232. 233–235 (SVT) is an NAD(+) binding site. 2 residues coordinate substrate: lysine 262 and aspartate 266. NAD(+)-binding positions include asparagine 267, 298 to 303 (GEVGKG), glutamate 319, asparagine 354, 375 to 377 (IGH), and asparagine 422.

Belongs to the adenosylhomocysteinase family. As to quaternary structure, homotetramer. Forms heteromultimers with AHCYL1 (via the C-terminal region). Interacts with ITPR1; with lower affinity than AHCYL1 and maybe via ITPR1. Interacts with SLC4A4. Interacts with ZCCHC4. The cofactor is NAD(+).

The protein resides in the cytoplasm. The protein localises to the microsome. The enzyme catalyses S-adenosyl-L-homocysteine + H2O = L-homocysteine + adenosine. It participates in amino-acid biosynthesis; L-homocysteine biosynthesis; L-homocysteine from S-adenosyl-L-homocysteine: step 1/1. In terms of biological role, may regulate the electrogenic sodium/bicarbonate cotransporter SLC4A4 activity and Mg(2+)-sensitivity. On the contrary of its homolog AHCYL1, does not regulate ITPR1 sensitivity to inositol 1,4,5-trisphosphate. The protein is Putative adenosylhomocysteinase 3 (AHCYL2) of Pongo abelii (Sumatran orangutan).